Reading from the N-terminus, the 320-residue chain is Reticulocalbin-2 (320 aa).

The N-terminal stretch at Met-1–Ala-25 is a signal peptide. 2 EF-hand domains span residues Glu-64–His-99 and Tyr-100–Asp-135. The Ca(2+) site is built by Asp-77, Asp-79, Asp-81, Glu-88, Asp-113, Asn-115, Asp-117, Thr-119, and Glu-124. Position 140 is a phosphothreonine (Thr-140). EF-hand domains are found at residues Phe-150–Glu-185, Met-189–Ala-224, Trp-230–Gly-265, and Ile-266–Ser-301. Ca(2+)-binding residues include Asp-167, Glu-176, Asp-202, Asn-204, Asp-206, Glu-213, Asp-243, Asp-245, Asp-247, Arg-249, Glu-254, Asp-279, Asn-281, Asp-283, Lys-285, and Glu-290. The Prevents secretion from ER motif lies at His-317–Leu-320.

It belongs to the CREC family. Binds the snake venom phospholipase complex taipoxin. As to expression, ubiquitous.

Its subcellular location is the endoplasmic reticulum lumen. Not known. Binds calcium. In Rattus norvegicus (Rat), this protein is Reticulocalbin-2 (Rcn2).